Here is a 1906-residue protein sequence, read N- to C-terminus: Zinc metalloprotease ZmpB (1906 aa).

An N-terminal signal peptide occupies residues 1 to 33; it reads MFKKDRFSIRKIKGVVGSVFLGSLLMAPSVVDA. A propeptide spanning residues 34–76 is cleaved from the precursor; it reads ATYHYVNKEIISQEAKDLIQTGKPDRNEVVYGLVYQKDQLPQT. The short motif at 73–77 is the LPXTG sorting signal element; sequence LPQTG. A Pentaglycyl murein peptidoglycan amidated threonine modification is found at Thr-76. 2 helical membrane-spanning segments follow: residues 77–98 and 105–127; these read GTEA…LLIY and SVFL…DPVA. Residues 128–1906 lie on the Extracellular side of the membrane; sequence TLALASREGV…TNSFKTSIFK (1779 aa). The disordered stretch occupies residues 178-436; sequence VETPQSITNQ…KASSVSPTDY (259 aa). Polar residues predominate over residues 181–196; the sequence is PQSITNQEQARTENQV. 5 stretches are compositionally biased toward basic and acidic residues: residues 201-239, 252-262, 271-335, 352-375, and 383-408; these read EAPK…KEDS, VESKPEEKVAV, KPAE…KEET, KQTE…REDE, and EPEK…DKIK. Repeat copies occupy residues 277–291, 293–315, 361–375, and 380–402. Positions 277–375 are 2 X 15 AA repeats of K-V-E-Q-A-G-E-P-V-A-P-R-E-D-E; that stretch reads KVEQAGEPVA…GEPVAPREDE (99 aa). Residues 293 to 375 form a 2 X 23 AA approximate repeats region; that stretch reads APVEPEKQPE…GEPVAPREDE (83 aa). The span at 421 to 436 shows a compositional bias: polar residues; sequence LNNQIDKASSVSPTDY. His-1562 is a binding site for Zn(2+). Glu-1563 is an active-site residue. The Zn(2+) site is built by His-1566 and Glu-1586.

Belongs to the peptidase M26 family. Zn(2+) is required as a cofactor. The Gram-positive cell-wall anchor motif LPXTG is located in the N-terminal part, in contrast to such motifs in other known streptococcal and staphylococcal proteins. The protease could be cleaved by the sortase and anchored in the membrane via the two potential N-terminal transmembrane domains, whereas the propeptide located prior to the LPXTG motif would remain attached to the cell wall peptidoglycan by an amide bond.

The protein resides in the secreted. The protein localises to the cell wall. It localises to the membrane. Its function is as follows. Is a virulence factor capable of inducing inflammation in the lower respiratory tract, by increasing tumor necrosis factor alpha (TNF-alpha) concentration in the lungs. Also appears to have other functions important in virulence in models of pneumonia and septicemia. The sequence is that of Zinc metalloprotease ZmpB (zmpB) from Streptococcus pneumoniae serotype 4 (strain ATCC BAA-334 / TIGR4).